Reading from the N-terminus, the 369-residue chain is uncharacterized protein (369 aa).

The protein belongs to the myo-inositol 1-phosphate synthase family.

This is an uncharacterized protein from Mycobacterium leprae (strain TN).